Consider the following 280-residue polypeptide: Urease accessory protein UreD (280 aa).

Belongs to the UreD family. UreD, UreF and UreG form a complex that acts as a GTP-hydrolysis-dependent molecular chaperone, activating the urease apoprotein by helping to assemble the nickel containing metallocenter of UreC. The UreE protein probably delivers the nickel.

It is found in the cytoplasm. Functionally, required for maturation of urease via the functional incorporation of the urease nickel metallocenter. The sequence is that of Urease accessory protein UreD from Pseudomonas aeruginosa (strain ATCC 15692 / DSM 22644 / CIP 104116 / JCM 14847 / LMG 12228 / 1C / PRS 101 / PAO1).